The primary structure comprises 343 residues: S-adenosylmethionine:tRNA ribosyltransferase-isomerase (343 aa).

Belongs to the QueA family. In terms of assembly, monomer.

It localises to the cytoplasm. The enzyme catalyses 7-aminomethyl-7-carbaguanosine(34) in tRNA + S-adenosyl-L-methionine = epoxyqueuosine(34) in tRNA + adenine + L-methionine + 2 H(+). Its pathway is tRNA modification; tRNA-queuosine biosynthesis. Functionally, transfers and isomerizes the ribose moiety from AdoMet to the 7-aminomethyl group of 7-deazaguanine (preQ1-tRNA) to give epoxyqueuosine (oQ-tRNA). This chain is S-adenosylmethionine:tRNA ribosyltransferase-isomerase, found in Coxiella burnetii (strain Dugway 5J108-111).